Reading from the N-terminus, the 429-residue chain is Lysophosphatidic acid phosphatase type 6 (429 aa).

The transit peptide at 1-32 directs the protein to the mitochondrion; that stretch reads MISRVFKLRMWAPVGVLTSLTYCLHQRRVALA. Residues 58 to 169 are substrate binding; that stretch reads RHGARSPLKP…VFIRSTNIYR (112 aa). The Nucleophile role is filled by H59. The active-site Proton donor is D336.

It belongs to the histidine acid phosphatase family. Monomer. Detected in brain (at protein level).

The protein localises to the mitochondrion. The enzyme catalyses a phosphate monoester + H2O = an alcohol + phosphate. The catalysed reaction is 1-(9Z-octadecenoyl)-sn-glycero-3-phosphate + H2O = 1-(9Z-octadecenoyl)-sn-glycerol + phosphate. In terms of biological role, hydrolyzes lysophosphatidic acid (LPA) containing a medium length fatty acid chain to the corresponding monoacylglycerol. Has highest activity with lysophosphatidic acid containing myristate (C14:0), monounsaturated oleate (C18:1) or palmitate (C16:0), and lower activity with C18:0 and C6:0 lysophosphatidic acid. This is Lysophosphatidic acid phosphatase type 6 (ACP6) from Bos taurus (Bovine).